The chain runs to 293 residues: MPWIQIKINSTGGQAETLSDALMENGAVSVTFQDSHDNPVFEPLPGETLLWGDTDVIGLFDAETEMSAVIAELENHPALGAGFRHKIEQIEDKDWEREWMDNFHPMQFGHRLWICPSWREIPEPDAVNVMLDPGLAFGTGTHPTTALCLQWLDGLDLAGKTVIDFGCGSGILAIAALKLGAARAIGIDIDPQAIQASRDNAERNGVSGRLELYLPKDQPADLSADVVVANILAGPLRELAPLIGCLPRQGGLLGLSGILASQAESVCEAYREKFALDPVAEREEWCRITGVHR.

Positions 145, 166, 188, and 230 each coordinate S-adenosyl-L-methionine.

It belongs to the methyltransferase superfamily. PrmA family.

Its subcellular location is the cytoplasm. The catalysed reaction is L-lysyl-[protein] + 3 S-adenosyl-L-methionine = N(6),N(6),N(6)-trimethyl-L-lysyl-[protein] + 3 S-adenosyl-L-homocysteine + 3 H(+). Its function is as follows. Methylates ribosomal protein L11. In Edwardsiella ictaluri (strain 93-146), this protein is Ribosomal protein L11 methyltransferase.